A 178-amino-acid chain; its full sequence is Aspartate carbamoyltransferase regulatory chain (178 aa).

The span at 1-15 shows a compositional bias: basic and acidic residues; the sequence is MNDREPNQKESKESV. Positions 1–23 are disordered; sequence MNDREPNQKESKESVNDAVPRAR. Positions 133, 138, 159, and 162 each coordinate Zn(2+).

The protein belongs to the PyrI family. Contains catalytic and regulatory chains. The cofactor is Zn(2+).

In terms of biological role, involved in allosteric regulation of aspartate carbamoyltransferase. In Haloquadratum walsbyi (strain DSM 16790 / HBSQ001), this protein is Aspartate carbamoyltransferase regulatory chain.